A 585-amino-acid chain; its full sequence is Protein cereblon (585 aa).

Disordered stretches follow at residues 1 to 109 and 156 to 195; these read MDEE…DLES and FSQE…IGFD. Residues 80 to 95 show a composition bias toward polar residues; it reads QDDTASEGSHPSSDMS. Positions 158–167 are enriched in basic and acidic residues; sequence QERRRSRTSE. Over residues 178-189 the composition is skewed to pro residues; that stretch reads VDPPPQQPPRPP. One can recognise a Lon N-terminal domain in the interval 225 to 451; the sequence is HMLIFLHQHI…LIKSTFKDET (227 aa). In terms of domain architecture, CULT spans 450–559; that stretch reads ETLFFCRYCN…LAGSSVRIGK (110 aa). Residues Cys-455, Cys-458, Cys-524, and Cys-527 each coordinate Zn(2+).

Belongs to the CRBN family. As to quaternary structure, likely a component of a DCX (DDB1-CUL4-X-box) protein ligase complex. May interact with pic/DDB1. Post-translationally, ubiquitinated. In terms of tissue distribution, expressed in the fat body (at protein level).

The protein resides in the nucleus. It participates in protein modification; protein ubiquitination. In terms of biological role, substrate recognition component of a DCX (DDB1-CUL4-X-box) E3 protein ligase complex that mediates the ubiquitination and subsequent proteasomal degradation of target proteins. Has an essential role in mediating growth by negatively regulating insulin signaling. It also has a role in maintaining presynaptic function in the neuromuscular junction synapses of third-instar larvae. The sequence is that of Protein cereblon from Drosophila melanogaster (Fruit fly).